The following is a 590-amino-acid chain: Putative ABC transporter ATP-binding protein MM_3016 (590 aa).

ABC transporter domains are found at residues 11-251 (VRFE…KLGI) and 317-550 (VRIE…AGLI). ATP contacts are provided by residues 45 to 52 (GPSGCGKS) and 350 to 357 (GHNGAGKT).

The protein belongs to the ABC transporter superfamily.

It is found in the cell membrane. Probably part of an ABC transporter complex. Responsible for energy coupling to the transport system. The protein is Putative ABC transporter ATP-binding protein MM_3016 of Methanosarcina mazei (strain ATCC BAA-159 / DSM 3647 / Goe1 / Go1 / JCM 11833 / OCM 88) (Methanosarcina frisia).